Here is a 616-residue protein sequence, read N- to C-terminus: Dihydroxy-acid dehydratase (616 aa).

Residue D81 coordinates Mg(2+). C122 contributes to the [2Fe-2S] cluster binding site. Residues D123 and K124 each coordinate Mg(2+). Residue K124 is modified to N6-carboxylysine. C195 lines the [2Fe-2S] cluster pocket. E491 contacts Mg(2+). The active-site Proton acceptor is the S517.

Belongs to the IlvD/Edd family. As to quaternary structure, homodimer. It depends on [2Fe-2S] cluster as a cofactor. Requires Mg(2+) as cofactor.

It carries out the reaction (2R)-2,3-dihydroxy-3-methylbutanoate = 3-methyl-2-oxobutanoate + H2O. It catalyses the reaction (2R,3R)-2,3-dihydroxy-3-methylpentanoate = (S)-3-methyl-2-oxopentanoate + H2O. The protein operates within amino-acid biosynthesis; L-isoleucine biosynthesis; L-isoleucine from 2-oxobutanoate: step 3/4. It participates in amino-acid biosynthesis; L-valine biosynthesis; L-valine from pyruvate: step 3/4. In terms of biological role, functions in the biosynthesis of branched-chain amino acids. Catalyzes the dehydration of (2R,3R)-2,3-dihydroxy-3-methylpentanoate (2,3-dihydroxy-3-methylvalerate) into 2-oxo-3-methylpentanoate (2-oxo-3-methylvalerate) and of (2R)-2,3-dihydroxy-3-methylbutanoate (2,3-dihydroxyisovalerate) into 2-oxo-3-methylbutanoate (2-oxoisovalerate), the penultimate precursor to L-isoleucine and L-valine, respectively. In Klebsiella pneumoniae (strain 342), this protein is Dihydroxy-acid dehydratase.